The following is a 307-amino-acid chain: Putative S-adenosyl-L-methionine-dependent methyltransferase MUL_4430 (307 aa).

Residues Asp-128 and Asp-157–Leu-158 each bind S-adenosyl-L-methionine.

The protein belongs to the UPF0677 family.

Functionally, exhibits S-adenosyl-L-methionine-dependent methyltransferase activity. This Mycobacterium ulcerans (strain Agy99) protein is Putative S-adenosyl-L-methionine-dependent methyltransferase MUL_4430.